The sequence spans 490 residues: ATP synthase subunit beta, chloroplastic (490 aa).

Thr6 carries the post-translational modification Phosphothreonine. A Phosphoserine modification is found at Ser13. 172-179 (GGAGVGKT) serves as a coordination point for ATP.

Belongs to the ATPase alpha/beta chains family. In terms of assembly, F-type ATPases have 2 components, CF(1) - the catalytic core - and CF(0) - the membrane proton channel. CF(1) has five subunits: alpha(3), beta(3), gamma(1), delta(1), epsilon(1). CF(0) has four main subunits: a(1), b(1), b'(1) and c(9-12).

It is found in the plastid. The protein localises to the chloroplast thylakoid membrane. The catalysed reaction is ATP + H2O + 4 H(+)(in) = ADP + phosphate + 5 H(+)(out). Functionally, produces ATP from ADP in the presence of a proton gradient across the membrane. The catalytic sites are hosted primarily by the beta subunits. The polypeptide is ATP synthase subunit beta, chloroplastic (Aethionema cordifolium (Lebanon stonecress)).